A 36-amino-acid polypeptide reads, in one-letter code: Pancreatic polypeptide (36 aa).

Residue Tyr-36 is modified to Tyrosine amide.

Belongs to the NPY family.

The protein localises to the secreted. Its function is as follows. Hormone secreted by pancreatic cells that acts as a regulator of pancreatic and gastrointestinal functions probably by signaling through the G protein-coupled receptor NPY4R2. The polypeptide is Pancreatic polypeptide (PPY) (Tapirus pinchaque (Mountain tapir)).